The chain runs to 917 residues: GTPase-activating Rap/Ran-GAP domain-like protein 3 (917 aa).

Positions 185 to 401 constitute a Rap-GAP domain; that stretch reads LLVLEEQEGS…RTLDMLIRSL (217 aa). The region spanning 483–792 is the CNH domain; the sequence is PHEVVCADSW…QLVASRSDIY (310 aa).

Belongs to the GARNL3 family.

This is GTPase-activating Rap/Ran-GAP domain-like protein 3 (GARNL3) from Gallus gallus (Chicken).